We begin with the raw amino-acid sequence, 243 residues long: Terpene cyclase paxB (243 aa).

7 helical membrane passes run 23–43 (FVVG…YISF), 49–69 (GMSI…CLVF), 78–98 (GVFW…ITFS), 112–132 (ISLI…ALAL), 134–154 (IGPA…LSVG), 172–194 (LWAS…WMYW), and 205–225 (LVLW…ICFW).

It belongs to the paxB family.

The protein resides in the membrane. It functions in the pathway secondary metabolite biosynthesis. Terpene cyclase; part of the ATM2 gene cluster that mediates the biosynthesis of paxilline, a mycotoxin that acts as an inhibitor of mammalian maxi-K channels. PaxG, the geranylgeranyl diphosphate (GGPP) synthase is proposed to catalyze the first step in paxilline biosynthesis. Condensation of indole-3-glycerol phosphate with GGPP by paxC then forms 3-geranylgeranylindole (3-GGI), followed by epoxidation and cyclization of this intermediate (by paxM and paxB) to form paspaline. Paspaline is subsequently converted to 13-desoxypaxilline by paxP, the latter being then converted to paxilline by paxQ. Finally paxilline can be mono- and di-prenylated by paxD. The sequence is that of Terpene cyclase paxB from Penicillium paxilli.